The sequence spans 288 residues: Serine/threonine-protein acetyltransferase YopJ (288 aa).

Catalysis depends on residues H109 and E128. H109 lines the CoA pocket. 167–168 (RS) serves as a coordination point for CoA. The active site involves C172. 1D-myo-inositol hexakisphosphate contacts are provided by residues 182 to 185 (KLYI) and 224 to 225 (KH). 227–230 (QGKK) serves as a coordination point for CoA. R257 contributes to the 1D-myo-inositol hexakisphosphate binding site. 266 to 270 (DGKEL) serves as a coordination point for CoA.

It belongs to the acetyltransferase YopJ family. It depends on 1D-myo-inositol hexakisphosphate as a cofactor.

It is found in the secreted. It catalyses the reaction L-threonyl-[protein] + acetyl-CoA = O-acetyl-L-threonyl-[protein] + CoA. The catalysed reaction is L-seryl-[protein] + acetyl-CoA = O-acetyl-L-seryl-[protein] + CoA. 1D-myo-inositol hexakisphosphate activates protein-acetyltransferase activity via an allosteric mechanism: 1D-myo-inositol hexakisphosphate-binding induces a conformational rearrangement that stimulates the interaction with acetyl-CoA. Serine/threonine-protein acetyltransferase translocated into infected cells, which inhibits the host immune response and induces cell death by mediating acetylation of target proteins. Inhibits the MAPK and NF-kappa-B signaling pathways by acetylating protein-kinases such as MAP2K1, MAP2K6, MAP3K7/TAK1 and I-kappa-B kinase (CHUK/IKKA and IKBKB) on serine and threonine residues critical for their activation by phosphorylation, thereby preventing protein-kinase activation. Promotes pyroptosis, a programmed cell death, in host cells by mediating acetylation of MAP3K7/TAK1: MAP3K7/TAK1 inactivation triggers activation of caspase-8 (CASP8), followed by CASP8-dependent cleavage of gasdermin-D (GSDMD) and induction of pyroptosis. Also able to induce intestinal barrier dysfunction by acetylating and inhibiting host protein-kinases RIPK2/RICK and MAP3K7/TAK1, thereby promoting cell death. The protein is Serine/threonine-protein acetyltransferase YopJ of Yersinia pseudotuberculosis serotype I (strain IP32953).